Here is a 637-residue protein sequence, read N- to C-terminus: Sodium-dependent nutrient amino acid transporter 1 (637 aa).

Positions 1–17 (MELKTMPQNGANAGTQH) are enriched in polar residues. Residues 1 to 39 (MELKTMPQNGANAGTQHNNNSNNKPDNNEKEAQKKEPER) form a disordered region. At 1-47 (MELKTMPQNGANAGTQHNNNSNNKPDNNEKEAQKKEPERTNWSNGLE) the chain is on the cytoplasmic side. Basic and acidic residues predominate over residues 26–39 (DNNEKEAQKKEPER). Helical transmembrane passes span 48–68 (FLMSCISVSVGLGNVWRFPFT), 75–95 (GAFLIPYIIVLFLIGKPMYYL), and 128–148 (TICIITYYSSLLALTVYYLFV). N-linked (GlcNAc...) asparagine glycosylation is found at Asn181 and Asn195. Transmembrane regions (helical) follow at residues 225–245 (PDWKLTIALFVSWVVIFLVIM), 254–274 (AAYFLALFPYVVLFALLGRAV), 303–323 (AVVQCFFSLAVGCGPIIMFAS), 337–357 (IVTTLDTLTSLLGGITIFAIL), 397–417 (LFSALFFFMLFVLGIGSIVAL), 443–463 (ICGFLMGLVYVTPGGQWILTL), 470–490 (TYVVFILAIFELAGIVWIYGL), 515–535 (FFTPIMMIVIFIYSMVTISPI), and 549–569 (AGWVLFAVGAAQFPLWGWWYI).

It belongs to the sodium:neurotransmitter symporter (SNF) (TC 2.A.22) family.

It localises to the membrane. Unusual broad substrate spectrum amino acid:sodium cotransporter that promotes absorption of the D isomers of essential amino acids. Neutral amino acids are the preferred substrates, especially methionine and phenylalanine. The polypeptide is Sodium-dependent nutrient amino acid transporter 1 (Drosophila virilis (Fruit fly)).